Here is a 137-residue protein sequence, read N- to C-terminus: Large ribosomal subunit protein uL16 (137 aa).

The protein belongs to the universal ribosomal protein uL16 family. As to quaternary structure, part of the 50S ribosomal subunit.

Functionally, binds 23S rRNA and is also seen to make contacts with the A and possibly P site tRNAs. This Afipia carboxidovorans (strain ATCC 49405 / DSM 1227 / KCTC 32145 / OM5) (Oligotropha carboxidovorans) protein is Large ribosomal subunit protein uL16.